Here is a 1390-residue protein sequence, read N- to C-terminus: DNA-directed RNA polymerase III subunit RPC1 (1390 aa).

Residues Cys69, Cys72, Cys79, His82, Cys109, and Cys112 each contribute to the Zn(2+) site. Lys144 is a DNA binding site. Zn(2+) contacts are provided by Cys156 and Cys159. DNA is bound by residues Lys167, Ser326, Lys348, Arg353, Arg360, and Arg366. Lys445 bears the N6-acetyllysine mark. Arg464 serves as a coordination point for RNA. Mg(2+)-binding residues include Asp499, Asp501, and Asp503. Residue Asp503 participates in RNA binding. Residues 844-856 (PTEFFFHTMAGRE) are bridging helix. The DNA site is built by Arg1159, Arg1305, and Lys1323.

This sequence belongs to the RNA polymerase beta' chain family. In terms of assembly, component of the RNA polymerase III (Pol III) complex consisting of 17 subunits: a ten-subunit catalytic core composed of POLR3A/RPC1, POLR3B/RPC2, POLR1C/RPAC1, POLR1D/RPAC2, POLR3K/RPC10, POLR2E/RPABC1, POLR2F/RPABC2, POLR2H/RPABC3, POLR2K/RPABC4 and POLR2L/RPABC5; a mobile stalk composed of two subunits POLR3H/RPC8 and CRCP/RPC9, protruding from the core and functioning primarily in transcription initiation; and additional subunits homologous to general transcription factors of the RNA polymerase II machinery, POLR3C/RPC3-POLR3F/RPC6-POLR3G/RPC7 heterotrimer required for transcription initiation and POLR3D/RPC4-POLR3E/RPC5 heterodimer involved in both transcription initiation and termination. As part of the RNA polymerase III complex, interacts with PKP2. Mg(2+) is required as a cofactor.

It is found in the nucleus. The protein resides in the cytoplasm. It localises to the cytosol. It catalyses the reaction RNA(n) + a ribonucleoside 5'-triphosphate = RNA(n+1) + diphosphate. Its function is as follows. Catalytic core component of RNA polymerase III (Pol III), a DNA-dependent RNA polymerase which synthesizes small non-coding RNAs using the four ribonucleoside triphosphates as substrates. Synthesizes 5S rRNA, snRNAs, tRNAs and miRNAs from at least 500 distinct genomic loci. Pol III-mediated transcription cycle proceeds through transcription initiation, transcription elongation and transcription termination stages. During transcription initiation, Pol III is recruited to DNA promoters type I, II or III with the help of general transcription factors and other specific initiation factors. Once the polymerase has escaped from the promoter it enters the elongation phase during which RNA is actively polymerized, based on complementarity with the template DNA strand. Transcription termination involves the release of the RNA transcript and polymerase from the DNA. Forms Pol III active center together with the second largest subunit POLR3B/RPC2. Appends one nucleotide at a time to the 3' end of the nascent RNA, with POLR3A/RPC1 contributing a Mg(2+)-coordinating DxDGD motif, and POLR3B/RPC2 participating in the coordination of a second Mg(2+) ion and providing lysine residues believed to facilitate Watson-Crick base pairing between the incoming nucleotide and template base. Typically, Mg(2+) ions direct a 5' nucleoside triphosphate to form a phosphodiester bond with the 3' hydroxyl of the preceding nucleotide of the nascent RNA, with the elimination of pyrophosphate. Pol III plays a key role in sensing and limiting infection by intracellular bacteria and DNA viruses. Acts as a nuclear and cytosolic DNA sensor involved in innate immune response. Can sense non-self dsDNA that serves as template for transcription into dsRNA. The non-self RNA polymerase III transcripts, such as Epstein-Barr virus-encoded RNAs (EBERs) induce type I interferon and NF-kappa-B through the RIG-I pathway. This chain is DNA-directed RNA polymerase III subunit RPC1, found in Bos taurus (Bovine).